A 132-amino-acid chain; its full sequence is tRNA (cytidine(56)-2'-O)-methyltransferase (132 aa).

S-adenosyl-L-methionine is bound by residues Leu35, 65–69 (GSEKV), and 83–90 (IGNQPHSE).

This sequence belongs to the aTrm56 family. Homodimer.

Its subcellular location is the cytoplasm. It catalyses the reaction cytidine(56) in tRNA + S-adenosyl-L-methionine = 2'-O-methylcytidine(56) in tRNA + S-adenosyl-L-homocysteine + H(+). In terms of biological role, specifically catalyzes the AdoMet-dependent 2'-O-ribose methylation of cytidine at position 56 in tRNAs. In Sulfolobus acidocaldarius (strain ATCC 33909 / DSM 639 / JCM 8929 / NBRC 15157 / NCIMB 11770), this protein is tRNA (cytidine(56)-2'-O)-methyltransferase.